A 312-amino-acid chain; its full sequence is Urease accessory protein 7 (312 aa).

The disordered stretch occupies residues 28-86 (QEATGTDSHHAHHHHTPSGASSAISHTHDNMPHDHGQFHDHGPGLWTPEEHGHTHEHLE). Residues 36–87 (HHAHHHHTPSGASSAISHTHDNMPHDHGQFHDHGPGLWTPEEHGHTHEHLEH) are histine rich nickel-binding domain. The segment covering 53–86 (HTHDNMPHDHGQFHDHGPGLWTPEEHGHTHEHLE) has biased composition (basic and acidic residues). Positions 115–122 (GPVGSGKT) match the GTP binding P-loop motif. The Switch domain 1 motif lies at 147-154 (TREDQEFL). Residues 171-172 (GG) carry the switch domain 2 motif.

Belongs to the SIMIBI class G3E GTPase family. UreG subfamily. In terms of assembly, URE4, URE6 and URE7 may form a complex that acts as a GTP-hydrolysis-dependent molecular chaperone, activating the urease apoprotein URE1.

Its function is as follows. Urease accessory protein that binds 2 nickel atoms likely via its conserved histidine-rich domain and supplies nickel for the functional urease URE1. Has probably a dual function as a nickel chaperone and GTPase. Plays a role in host brain invasion. The sequence is that of Urease accessory protein 7 from Cryptococcus neoformans var. grubii serotype A (strain H99 / ATCC 208821 / CBS 10515 / FGSC 9487) (Filobasidiella neoformans var. grubii).